A 166-amino-acid chain; its full sequence is Phospholipase A2 myotoxin inhibitor protein (166 aa).

The signal sequence occupies residues 1 to 19 (MRLILLSGLLLLGTFLANG). In terms of domain architecture, C-type lectin spans 46-161 (LKYAFLTVHK…CDDNLLVVCE (116 aa)). 2 disulfides stabilise this stretch: Cys83–Cys160 and Cys138–Cys152. A glycan (N-linked (GlcNAc...) asparagine) is linked at Asn122.

This sequence belongs to the alpha-type phospholipase A2 inhibitor family. In terms of assembly, oligomer. Homotrimer; non-covalently linked. Glycosylated. The glycosylation has no role in the association of this PLI and PA2 enzyme. Expressed by the liver.

The protein resides in the secreted. Its function is as follows. This phospholipase A2 inhibitor binds directly phospholipase A2 in the presence or absence of calcium. Has anti-enzymatic, anti-myotoxic, anti-edema inducing, anti-cytotoxic, anti-bactericidal, and anti-lethal properties against basic and acidic phospholipases A2 from Bothrops venoms. The protein is Phospholipase A2 myotoxin inhibitor protein of Bothrops moojeni (Lance-headed viper).